A 25-amino-acid polypeptide reads, in one-letter code: Dermaseptin-DI5 (25 aa).

It belongs to the frog skin active peptide (FSAP) family. Dermaseptin subfamily. Expressed by the skin glands.

It localises to the secreted. Antibacterial peptide with activity against Gram-positive bacteria S.aureus and E.faecalis, and Gram-negative bacteria P.aeruginosa and E.coli. This Phyllomedusa distincta (Monkey frog) protein is Dermaseptin-DI5.